Consider the following 450-residue polypeptide: WD repeat-containing protein ATCSA-1 (450 aa).

WD repeat units follow at residues 41–81 (PHRG…DYEA), 101–141 (GHKY…AVVD), 148–185 (VYRT…FSHT), and 188–228 (GHRD…CFRV). A disordered region spans residues 269–298 (LQSKQTGSQSVKGSSSAKASVEKSRQKRIH). Over residues 271 to 287 (SKQTGSQSVKGSSSAKA) the composition is skewed to low complexity. WD repeat units lie at residues 310-349 (AHYG…NTLV) and 397-436 (GHYE…EDEM).

As to quaternary structure, interacts with DDB1A. Expressed in roots, leaves, stems, flowers and siliques.

Its subcellular location is the nucleus. Involved in UV-B tolerance and genome integrity. In association with DDB2, is necessary for repair of UV-B-induced DNA lesions. The chain is WD repeat-containing protein ATCSA-1 from Arabidopsis thaliana (Mouse-ear cress).